A 518-amino-acid chain; its full sequence is Membrane-bound lytic murein transglycosylase F (518 aa).

An N-terminal signal peptide occupies residues 1–21 (MKKLKINYLFIGILALLLAVA). Residues 22–269 (LWPSIPWFGK…RIEEKYLGHG (248 aa)) are non-LT domain. Residues 270–518 (DDFDYVDTRT…SRKGSEEKQN (249 aa)) are LT domain. The active site involves E314.

This sequence in the N-terminal section; belongs to the bacterial solute-binding protein 3 family. In the C-terminal section; belongs to the transglycosylase Slt family.

It is found in the cell outer membrane. The catalysed reaction is Exolytic cleavage of the (1-&gt;4)-beta-glycosidic linkage between N-acetylmuramic acid (MurNAc) and N-acetylglucosamine (GlcNAc) residues in peptidoglycan, from either the reducing or the non-reducing ends of the peptidoglycan chains, with concomitant formation of a 1,6-anhydrobond in the MurNAc residue.. Murein-degrading enzyme that degrades murein glycan strands and insoluble, high-molecular weight murein sacculi, with the concomitant formation of a 1,6-anhydromuramoyl product. Lytic transglycosylases (LTs) play an integral role in the metabolism of the peptidoglycan (PG) sacculus. Their lytic action creates space within the PG sacculus to allow for its expansion as well as for the insertion of various structures such as secretion systems and flagella. The chain is Membrane-bound lytic murein transglycosylase F from Escherichia coli O6:K15:H31 (strain 536 / UPEC).